Here is a 237-residue protein sequence, read N- to C-terminus: Lectin alpha chain (237 aa).

Glu8 and Asp10 together coordinate Mn(2+). Positions 10, 12, 14, and 19 each coordinate Ca(2+). Tyr12 is an a carbohydrate binding site. Asp19 and His24 together coordinate Mn(2+). Residue Leu99–Tyr100 participates in a carbohydrate binding. Residue Asp208 coordinates Ca(2+). Residue Arg228 coordinates a carbohydrate.

This sequence belongs to the leguminous lectin family. Equilibrium between homodimer and homotetramer. Oligomerization is pH-dependent with homotetramers forming at pH 6.5 and above. In terms of processing, the beta and gamma chains are produced by partial proteolytic processing of the lectin alpha chain by an asparaginyl endopeptidase. Mixture of 60% alpha lectin and 40% of its beta and gamma proteolytic fragments. In terms of tissue distribution, seed.

It is found in the vacuole. It localises to the aleurone grain. Functionally, D-mannose/D-glucose-binding lectin. Has anti-inflammatory activity in rats. Induces histamine release in mast cells from hamster and rat. Induces lymphocyte proliferation and IFNG production. Shows toxicity against the aquatic snail B.glabrata at concentrations higher than 20 ug/ml. This is Lectin alpha chain from Dioclea virgata.